The chain runs to 562 residues: ATP synthase subunit beta, mitochondrial (562 aa).

Composition is skewed to low complexity over residues 1–13 and 20–40; these read MASRRLLSSLLRS and SKSPISNINPKLSSSSPSSKS. 2 disordered regions span residues 1–43 and 58–83; these read MASR…SRAS and SAAAAAPPQPPPAKPEGGKGGGKITD. The transit peptide at 1–55 directs the protein to the mitochondrion; the sequence is MASRRLLSSLLRSSSRRSVSKSPISNINPKLSSSSPSSKSRASPYGYLLTRAAEY. ATP is bound at residue 237–244; that stretch reads GGAGVGKT.

Belongs to the ATPase alpha/beta chains family. In terms of assembly, F-type ATPases have 2 components, CF(1) - the catalytic core - and CF(0) - the membrane proton channel. CF(1) has five subunits: alpha(3), beta(3), gamma(1), delta(1), epsilon(1). CF(0) has three main subunits: a, b and c.

The protein localises to the mitochondrion. It is found in the mitochondrion inner membrane. It catalyses the reaction ATP + H2O + 4 H(+)(in) = ADP + phosphate + 5 H(+)(out). In terms of biological role, mitochondrial membrane ATP synthase (F(1)F(0) ATP synthase or Complex V) produces ATP from ADP in the presence of a proton gradient across the membrane which is generated by electron transport complexes of the respiratory chain. F-type ATPases consist of two structural domains, F(1) - containing the extramembraneous catalytic core, and F(0) - containing the membrane proton channel, linked together by a central stalk and a peripheral stalk. During catalysis, ATP synthesis in the catalytic domain of F(1) is coupled via a rotary mechanism of the central stalk subunits to proton translocation. Subunits alpha and beta form the catalytic core in F(1). Rotation of the central stalk against the surrounding alpha(3)beta(3) subunits leads to hydrolysis of ATP in three separate catalytic sites on the beta subunits. In Hevea brasiliensis (Para rubber tree), this protein is ATP synthase subunit beta, mitochondrial (ATPB).